The primary structure comprises 233 residues: Large ribosomal subunit protein uL22m (233 aa).

This sequence belongs to the universal ribosomal protein uL22 family. Component of the mitochondrial ribosome large subunit (39S) which comprises a 16S rRNA and about 50 distinct proteins.

The protein resides in the mitochondrion. The sequence is that of Large ribosomal subunit protein uL22m (mRpL22) from Drosophila pseudoobscura pseudoobscura (Fruit fly).